The sequence spans 1383 residues: DNA-directed RNA polymerase subunit beta (1383 aa).

It belongs to the RNA polymerase beta chain family. In terms of assembly, the RNAP catalytic core consists of 2 alpha, 1 beta, 1 beta' and 1 omega subunit. When a sigma factor is associated with the core the holoenzyme is formed, which can initiate transcription.

It carries out the reaction RNA(n) + a ribonucleoside 5'-triphosphate = RNA(n+1) + diphosphate. Functionally, DNA-dependent RNA polymerase catalyzes the transcription of DNA into RNA using the four ribonucleoside triphosphates as substrates. The sequence is that of DNA-directed RNA polymerase subunit beta from Xanthomonas axonopodis pv. citri (strain 306).